The chain runs to 818 residues: MVSWRRRPGPGLARLWGLCCLVLGCWRGALGCPASCRCSSWRIWCSEPVPGITSFPVPQRSTEDDNVTEIYIANQRKLESINDNEVGFYVGLKNLTVVDSGLRFVSRQAFVKNINLQYINLSRNKLSSLSKKPFRHLGLSDLILVDNPFKCSCEIMWIKKFQETKFYTEAQDIYCVDDNNKRIALMDMKVPNCDLPSANLSNYNITVVEGKSITLYCDTTGGPPPNVSWVLTNLVSNHESDTSKNPASLTIKNVSSMDSGLWISCVAENIVGEVQTSAELTVFFAPNITFIESPTPDHHWCIPFTVKGNPKPTLQWFYEGAILNESEYICTKIHVINQSEYHGCLQLDNPTHLNNGAYTLLAKNEYGEDEKRVDAHFMSVPGDGSGPIVDPDVYEYETTPNDLGDTTNNSNQITSPDVSNKENEDSITVYVVVGIAALVCTGLVIMLIILKFGRHSKFGMKGPSSVISNDDDSASPLHHISNGSNTPSSSEGGPDAVIIGMTKIPVIENPQYFGITNSQLKPDTFVQHIKRHNIVLKRELGEGAFGKVFLAECYNLCPEQDKILVAVKTLKDASDNARKDFHREAELLTNLQHEHIVKFYGVCVEGDPLIMVFEYMKHGDLNKFLRAHGPDAVLMAEGNRPAELTQSQMLHIAQQIAAGMVYLASQHFVHRDLATRNCLVGENLLVKIGDFGMSRDVYSTDYYRVGGHTMLPIRWMPPESIMYRKFTTESDVWSLGVVLWEIFTYGKQPWYQLSNNEVIECITQGRVLQRPRTCPKEVYDLMLGCWQREPHMRLNIKEIHSLLQNLAKASPVYLDILG.

The first 31 residues, 1 to 31 (MVSWRRRPGPGLARLWGLCCLVLGCWRGALG), serve as a signal peptide directing secretion. 2 disulfides stabilise this stretch: Cys32/Cys38 and Cys36/Cys45. The Extracellular segment spans residues 32–426 (CPASCRCSSW…DVSNKENEDS (395 aa)). N-linked (GlcNAc...) asparagine glycosylation is present at Asn66. One copy of the LRR 1 repeat lies at 71-92 (YIANQRKLESINDNEVGFYVGL). Asn94 carries N-linked (GlcNAc...) asparagine glycosylation. The stretch at 95–116 (LTVVDSGLRFVSRQAFVKNINL) is one LRR 2 repeat. Asn120 is a glycosylation site (N-linked (GlcNAc...) asparagine). 2 cysteine pairs are disulfide-bonded: Cys151–Cys175 and Cys153–Cys193. An Ig-like C2-type 1 domain is found at 196-281 (PSANLSNYNI…GEVQTSAELT (86 aa)). N-linked (GlcNAc...) asparagine glycosylation is found at Asn199, Asn204, Asn226, Asn253, Asn287, Asn324, and Asn337. Cys217 and Cys265 are joined by a disulfide. The Ig-like C2-type 2 domain occupies 295-364 (TPDHHWCIPF…NGAYTLLAKN (70 aa)). A disulfide bridge links Cys301 with Cys344. Positions 384–394 (GSGPIVDPDVY) are provides specificity for BDNF as ligand versus NTF3 and NTF4. Over residues 400-418 (PNDLGDTTNNSNQITSPDV) the composition is skewed to polar residues. The segment at 400-420 (PNDLGDTTNNSNQITSPDVSN) is disordered. Residue Asn408 is glycosylated (N-linked (GlcNAc...) asparagine). The chain crosses the membrane as a helical span at residues 427–450 (ITVYVVVGIAALVCTGLVIMLIIL). The Cytoplasmic segment spans residues 451 to 818 (KFGRHSKFGM…ASPVYLDILG (368 aa)). The disordered stretch occupies residues 469 to 494 (NDDDSASPLHHISNGSNTPSSSEGGP). Polar residues predominate over residues 481–491 (SNGSNTPSSSE). Tyr512 carries the phosphotyrosine; by autocatalysis modification. The Protein kinase domain maps to 534 to 803 (IVLKRELGEG…LNIKEIHSLL (270 aa)). ATP is bound by residues 540 to 548 (LGEGAFGKV) and Lys568. Asp672 (proton acceptor) is an active-site residue. 4 positions are modified to phosphotyrosine; by autocatalysis: Tyr698, Tyr702, Tyr703, and Tyr813.

It belongs to the protein kinase superfamily. Tyr protein kinase family. Insulin receptor subfamily. As to quaternary structure, exists in a dynamic equilibrium between monomeric (low affinity) and dimeric (high affinity) structures. Interacts (phosphorylated upon activation by BDNF) with SHC1; mediates SHC1 phosphorylation and activation. Interacts (phosphorylated upon activation by BDNF) with PLCG1 and/or PLCG2; mediates PLCG1 phosphorylation and activation. Interacts with SH2B1 and SH2B2. Interacts with NGFR; may regulate the ligand specificity of the receptor. Interacts with SORCS2; this interaction is important for normal targeting to post-synaptic densities in response to high-frequency stimulation. Interacts (phosphorylated upon ligand-binding) with SH2D1A; regulates NTRK2. Interacts with SQSTM1 and KIDINS220. Interacts (phosphorylated upon ligand-binding) with FRS2; activates the MAPK signaling pathway. Interacts with APPL1. Interacts with MAPK8IP3/JIP3 and KLC1; interaction with KLC1 is mediated by MAPK8IP3/JIP3. Ligand-mediated auto-phosphorylation. In terms of tissue distribution, detected in embryonic brain and orsal root ganglia.

The protein resides in the cell membrane. It is found in the endosome membrane. The protein localises to the cell projection. It localises to the axon. Its subcellular location is the dendrite. The protein resides in the cytoplasm. It is found in the perinuclear region. The protein localises to the postsynaptic density. It catalyses the reaction L-tyrosyl-[protein] + ATP = O-phospho-L-tyrosyl-[protein] + ADP + H(+). The neuronal activity and the influx of calcium positively regulate the kinase activity and the internalization of the receptor which are both important for active signaling. Regulated by NGFR that may control the internalization of the receptor. NGFR may also stimulate the activation by BDNF compared to NTF3 and NTF4. The formation of active receptors dimers able to fully transduce the ligand-mediated signal, may be negatively regulated by the formation of inactive heterodimers with the non-catalytic isoforms. Its function is as follows. Receptor tyrosine kinase involved in the development and the maturation of the central and the peripheral nervous systems through regulation of neuron survival, proliferation, migration, differentiation, and synapse formation and plasticity. Receptor for BDNF/brain-derived neurotrophic factor and NTF4/neurotrophin-4. Alternatively can also bind NTF3/neurotrophin-3 which is less efficient in activating the receptor but regulates neuron survival through NTRK2. Upon ligand-binding, undergoes homodimerization, autophosphorylation and activation. Recruits, phosphorylates and/or activates several downstream effectors including SHC1, FRS2, SH2B1, SH2B2 and PLCG1 that regulate distinct overlapping signaling cascades. Through SHC1, FRS2, SH2B1, SH2B2 activates the GRB2-Ras-MAPK cascade that regulates for instance neuronal differentiation including neurite outgrowth. Through the same effectors controls the Ras-PI3 kinase-AKT1 signaling cascade that mainly regulates growth and survival. Through PLCG1 and the downstream protein kinase C-regulated pathways controls synaptic plasticity. Thereby, plays a role in learning and memory by regulating both short term synaptic function and long-term potentiation. PLCG1 also leads to NF-Kappa-B activation and the transcription of genes involved in cell survival. Hence, it is able to suppress anoikis, the apoptosis resulting from loss of cell-matrix interactions. May also play a role in neutrophin-dependent calcium signaling in glial cells and mediate communication between neurons and glia. This Gallus gallus (Chicken) protein is BDNF/NT-3 growth factors receptor (NTRK2).